The primary structure comprises 450 residues: GTPase Der (450 aa).

2 consecutive EngA-type G domains span residues 3-170 (PTIA…LATG) and 183-356 (LKIA…AECS). GTP contacts are provided by residues 9–16 (GRPNVGKS), 56–60 (DTGGL), 122–125 (NKVD), 189–196 (GRPNAGKS), 236–240 (DTAGV), and 301–304 (NKID). Positions 357 to 441 (LRISTGQLNR…PLNIVFRSTF (85 aa)) constitute a KH-like domain.

It belongs to the TRAFAC class TrmE-Era-EngA-EngB-Septin-like GTPase superfamily. EngA (Der) GTPase family. As to quaternary structure, associates with the 50S ribosomal subunit.

In terms of biological role, GTPase that plays an essential role in the late steps of ribosome biogenesis. The polypeptide is GTPase Der (Maridesulfovibrio salexigens (strain ATCC 14822 / DSM 2638 / NCIMB 8403 / VKM B-1763) (Desulfovibrio salexigens)).